We begin with the raw amino-acid sequence, 154 residues long: 6,7-dimethyl-8-ribityllumazine synthase (154 aa).

5-amino-6-(D-ribitylamino)uracil-binding positions include phenylalanine 22, 56-58, and 80-82; these read AFE and AVI. 85–86 provides a ligand contact to (2S)-2-hydroxy-3-oxobutyl phosphate; the sequence is AT. The Proton donor role is filled by histidine 88. 5-amino-6-(D-ribitylamino)uracil is bound at residue phenylalanine 113. Residue arginine 127 participates in (2S)-2-hydroxy-3-oxobutyl phosphate binding.

Belongs to the DMRL synthase family.

The catalysed reaction is (2S)-2-hydroxy-3-oxobutyl phosphate + 5-amino-6-(D-ribitylamino)uracil = 6,7-dimethyl-8-(1-D-ribityl)lumazine + phosphate + 2 H2O + H(+). It participates in cofactor biosynthesis; riboflavin biosynthesis; riboflavin from 2-hydroxy-3-oxobutyl phosphate and 5-amino-6-(D-ribitylamino)uracil: step 1/2. Functionally, catalyzes the formation of 6,7-dimethyl-8-ribityllumazine by condensation of 5-amino-6-(D-ribitylamino)uracil with 3,4-dihydroxy-2-butanone 4-phosphate. This is the penultimate step in the biosynthesis of riboflavin. This Syntrophobacter fumaroxidans (strain DSM 10017 / MPOB) protein is 6,7-dimethyl-8-ribityllumazine synthase.